The chain runs to 94 residues: Protein translocase subunit SecE (94 aa).

A disordered region spans residues 1 to 32 (MTDAVGSIDMPDAQDEAPDSKKSRKGGKRGKK). Over residues 22-32 (KSRKGGKRGKK) the composition is skewed to basic residues. Residues 65–85 (TVVIIFVVIMIGLVTLIDYGF) traverse the membrane as a helical segment.

It belongs to the SecE/SEC61-gamma family. In terms of assembly, component of the Sec protein translocase complex. Heterotrimer consisting of SecY, SecE and SecG subunits. The heterotrimers can form oligomers, although 1 heterotrimer is thought to be able to translocate proteins. Interacts with the ribosome. Interacts with SecDF, and other proteins may be involved. Interacts with SecA.

Its subcellular location is the cell membrane. Essential subunit of the Sec protein translocation channel SecYEG. Clamps together the 2 halves of SecY. May contact the channel plug during translocation. The chain is Protein translocase subunit SecE from Streptomyces lividans.